Here is a 186-residue protein sequence, read N- to C-terminus: Golgi apparatus membrane protein-like protein ECHIDNA (186 aa).

Residue Met1 is modified to N-acetylmethionine. The next 3 membrane-spanning stretches (helical) occupy residues 35 to 55 (ILSA…VLLA), 108 to 128 (FWWT…FSLI), and 132 to 152 (ADYL…IIGF).

The protein belongs to the TVP23 family. Component of a trans-Golgi network (TGN)-localized ECH/YIP4 complex made of ECH, YIP4A and YIP4B. Interacts directly with YIP4A and YIP4B.

Its subcellular location is the golgi apparatus. The protein localises to the trans-Golgi network membrane. It is found in the early endosome membrane. Functionally, mediates trans-Golgi-network trafficking and cell elongation. Required for keeping the appropriate balance between secretory trafficking and vacuolar targeting of a subset of proteins. The ECH/YIP4 complex is involved in the modulation of the trans-Golgi network (TGN)-mediated trafficking of some proteins and cell wall components (e.g. pectin and hemicellulose) to the cell wall in dark-grown hypocotyls and in secretory cells of the seed coat. This is Golgi apparatus membrane protein-like protein ECHIDNA from Arabidopsis thaliana (Mouse-ear cress).